Reading from the N-terminus, the 374-residue chain is Ribosomal RNA large subunit methyltransferase G (374 aa).

It belongs to the methyltransferase superfamily. RlmG family.

The protein resides in the cytoplasm. It carries out the reaction guanosine(1835) in 23S rRNA + S-adenosyl-L-methionine = N(2)-methylguanosine(1835) in 23S rRNA + S-adenosyl-L-homocysteine + H(+). Functionally, specifically methylates the guanine in position 1835 (m2G1835) of 23S rRNA. The chain is Ribosomal RNA large subunit methyltransferase G from Pseudomonas fluorescens (strain Pf0-1).